The following is a 333-amino-acid chain: Ferredoxin--NADP reductase (333 aa).

FAD contacts are provided by aspartate 32, glutamine 40, tyrosine 45, alanine 85, phenylalanine 119, aspartate 285, and threonine 326.

The protein belongs to the ferredoxin--NADP reductase type 2 family. As to quaternary structure, homodimer. FAD serves as cofactor.

It catalyses the reaction 2 reduced [2Fe-2S]-[ferredoxin] + NADP(+) + H(+) = 2 oxidized [2Fe-2S]-[ferredoxin] + NADPH. The chain is Ferredoxin--NADP reductase from Neorickettsia sennetsu (strain ATCC VR-367 / Miyayama) (Ehrlichia sennetsu).